The chain runs to 259 residues: Phosphate import ATP-binding protein PstB (259 aa).

Residues 11–254 (AESKNLNFYY…PDNPRTEDYI (244 aa)) enclose the ABC transporter domain. Residue 43-50 (GPSGCGKS) participates in ATP binding.

Belongs to the ABC transporter superfamily. Phosphate importer (TC 3.A.1.7) family. The complex is composed of two ATP-binding proteins (PstB), two transmembrane proteins (PstC and PstA) and a solute-binding protein (PstS).

The protein localises to the cell inner membrane. The enzyme catalyses phosphate(out) + ATP + H2O = ADP + 2 phosphate(in) + H(+). Its function is as follows. Part of the ABC transporter complex PstSACB involved in phosphate import. Responsible for energy coupling to the transport system. This chain is Phosphate import ATP-binding protein PstB, found in Geobacter sulfurreducens (strain ATCC 51573 / DSM 12127 / PCA).